The chain runs to 176 residues: MCKTLHGTLLLLAIFVLFLNFSHATAKRTRRGMEIFEKNFIDKNKLKDVYDVFKYLYNTHSADTYLSNIKNESFTMNIWGFGEIEMVKTKCRKIDSDFYKCSFQREFYNLKRTPGETMYYISLPGSVRCRKLLSKLDNCPFEEQTEQLKREICYFVVYPDYIEQNIHAVRFDCYTK.

The first 26 residues, 1 to 26, serve as a signal peptide directing secretion; sequence MCKTLHGTLLLLAIFVLFLNFSHATA. The propeptide occupies 27 to 31; the sequence is KRTRR. N-linked (GlcNAc...) asparagine glycosylation occurs at Asn-71. Disulfide bonds link Cys-129-Cys-139 and Cys-153-Cys-173.

Belongs to the cystatin family. Prostate and lacrimal gland.

The chain is Cystatin-related protein 1 (Andpro) from Rattus norvegicus (Rat).